A 461-amino-acid chain; its full sequence is Steroidogenic factor 1 (461 aa).

The nuclear receptor DNA-binding region spans 10-85 (DELCPVCGDK…VGMRLEAVRA (76 aa)). Residues 13-33 (CPVCGDKVSGYHYGLLTCESC) form an NR C4-type zinc finger. Residues lysine 34, lysine 38, and lysine 72 each carry the N6-acetyllysine modification. Residues 49–73 (CTESQSCKIDKTQRKRCPFCRFQKC) form an NR C4-type zinc finger. Residues 116-158 (NGFKLETGPPVGVPPPPPPPPDYMLPHGLHASEPKGLASGPPA) form a disordered region. Residue lysine 119 forms a Glycyl lysine isopeptide (Lys-Gly) (interchain with G-Cter in SUMO) linkage. Over residues 126-138 (VGVPPPPPPPPDY) the composition is skewed to pro residues. A Glycyl lysine isopeptide (Lys-Gly) (interchain with G-Cter in SUMO) cross-link involves residue lysine 194. Serine 203 carries the post-translational modification Phosphoserine; by CDK7. The NR LBD domain maps to 222-459 (GVPELILQLL…NLLIEMLQAK (238 aa)). Residues 230-461 (LLQLEPDEDQ…LIEMLQAKQT (232 aa)) form an important for dimerization region. Glycine 341, tyrosine 436, and lysine 440 together coordinate a 1,2-diacyl-sn-glycero-3-phosphocholine.

It belongs to the nuclear hormone receptor family. NR5 subfamily. Binds DNA as a monomer. Part of a complex consisting of SFPQ, NONO and NR5A1. Interacts with NR0B2. Interacts with DGKQ and CDK7. Binds to and activated by HIPK3. In terms of processing, may be regulated by phosphorylation and dephosphorylation. Acetylation stimulates the transcriptional activity. Post-translationally, sumoylation reduces CDK7-mediated phosphorylation on Ser-203. In terms of processing, phosphorylated on Ser-203 by CDK7. This phosphorylation promotes transcriptional activity. In terms of tissue distribution, adrenal, ovary, testis, placenta, adipocyte, and brain.

Its subcellular location is the nucleus. Functionally, transcriptional activator. Seems to be essential for sexual differentiation and formation of the primary steroidogenic tissues. Binds to the Ad4 site found in the promoter region of steroidogenic P450 genes such as CYP11A, CYP11B and CYP21B. Also regulates the AMH/Muellerian inhibiting substance gene as well as the AHCH and STAR genes. 5'-YCAAGGYC-3' and 5'-RRAGGTCA-3' are the consensus sequences for the recognition by NR5A1. The SFPQ-NONO-NR5A1 complex binds to the CYP17 promoter and regulates basal and cAMP-dependent transcriptional activity. Binds phospholipids with a phosphatidylinositol (PI) headgroup, in particular PI(3,4)P2 and PI(3,4,5)P3. Activated by the phosphorylation of NR5A1 by HIPK3 leading to increased steroidogenic gene expression upon cAMP signaling pathway stimulation. In Bos taurus (Bovine), this protein is Steroidogenic factor 1 (NR5A1).